Here is a 362-residue protein sequence, read N- to C-terminus: Probable choline-phosphate cytidylyltransferase (362 aa).

The span at 1–37 shows a compositional bias: basic and acidic residues; that stretch reads MGEEGIKINDTHKRRIDEVEPSEKEDNVERQTKKYNF. Residues 1 to 79 form a disordered region; that stretch reads MGEEGIKIND…VSPVEEEPRD (79 aa). Residues 109–117 and Lys147 contribute to the CTP site; that span reads VFDLFHIGH. 2 residues coordinate substrate: Lys147 and Trp176. CTP is bound by residues 193–194, Tyr198, and 221–225; these read HD and RTEGV. Residues 308–362 form a disordered region; that stretch reads KNPLHGSSEPSSPGPTGFLGGINRWMQRRSSSHYDLPRVGNEIAASSSSATEENH. 2 stretches are compositionally biased toward low complexity: residues 313 to 323 and 351 to 362; these read GSSEPSSPGPT and AASSSSATEENH. A phosphoserine mark is found at Ser315 and Ser319. Thr323 is subject to Phosphothreonine. Ser355 carries the phosphoserine modification.

Belongs to the cytidylyltransferase family.

It is found in the nucleus. The enzyme catalyses phosphocholine + CTP + H(+) = CDP-choline + diphosphate. This Schizosaccharomyces pombe (strain 972 / ATCC 24843) (Fission yeast) protein is Probable choline-phosphate cytidylyltransferase.